We begin with the raw amino-acid sequence, 488 residues long: Glutamate--tRNA ligase (488 aa).

The short motif at 11–21 (PSPTGQIHIGN) is the 'HIGH' region element. 4 residues coordinate Zn(2+): Cys-108, Cys-110, Cys-135, and Asp-137. The short motif at 252 to 256 (KLSKR) is the 'KMSKS' region element. Position 255 (Lys-255) interacts with ATP.

This sequence belongs to the class-I aminoacyl-tRNA synthetase family. Glutamate--tRNA ligase type 1 subfamily. As to quaternary structure, monomer. The cofactor is Zn(2+).

It is found in the cytoplasm. It catalyses the reaction tRNA(Glu) + L-glutamate + ATP = L-glutamyl-tRNA(Glu) + AMP + diphosphate. Its function is as follows. Catalyzes the attachment of glutamate to tRNA(Glu) in a two-step reaction: glutamate is first activated by ATP to form Glu-AMP and then transferred to the acceptor end of tRNA(Glu). The sequence is that of Glutamate--tRNA ligase from Natranaerobius thermophilus (strain ATCC BAA-1301 / DSM 18059 / JW/NM-WN-LF).